The chain runs to 994 residues: Transposase for transposon Tn2501 (994 aa).

The protein belongs to the transposase 7 family.

Functionally, required for transposition of transposon Tn2501. The protein is Transposase for transposon Tn2501 (tnpA) of Escherichia coli.